A 395-amino-acid chain; its full sequence is Cation channel sperm-associated protein 3 (395 aa).

The Cytoplasmic segment spans residues 1–48 (MSQHFHHNPVRVKSGSLFATASEALQARLSKIKRKDKECQAYFRKVIK). A helical membrane pass occupies residues 49–71 (STFFQIVMITTVTTNSFLLVLGT). The Extracellular portion of the chain corresponds to 72–80 (NYDIQFEFF). Residues 81–107 (RTFEVSELFFVSVYVCEFLMKVYVDPI) traverse the membrane as a helical segment. A topological domain (cytoplasmic) is located at residue Thr108. Residues 109-131 (YWKDGYNILDVIILIILTIPYLL) traverse the membrane as a helical segment. Residues 132-143 (RKIKGNHSAYLH) are Extracellular-facing. The helical transmembrane segment at 144–160 (FADGIQSLRILKLISYS) threads the bilayer. At 161–168 (RGIRTLII) the chain is on the cytoplasmic side. A helical transmembrane segment spans residues 169–195 (AVGETVYTVASVLTLLFLLMFVFAILG). Residues 196-216 (FCLFGVTDRGDLENWGNLASA) lie on the Extracellular side of the membrane. The segment at residues 217-236 (FFTLFSLATVDGWTDLQEEL) is an intramembrane region (helical; Pore-forming). Residues 237-242 (DKRKFT) lie on the Extracellular side of the membrane. Residues 243–268 (VSRAFTILFILLASFIFLNMFVGVMI) traverse the membrane as a helical segment. The Cytoplasmic segment spans residues 269-395 (MHTEDSMKKF…ESSSSLSGLS (127 aa)).

This sequence belongs to the cation channel sperm-associated (TC 1.A.1.19) family. As to quaternary structure, component of the CatSper complex or CatSpermasome composed of the core pore-forming members CATSPER1, CATSPER2, CATSPER3 and CATSPER4 as well as auxiliary members CATSPERB, CATSPERG2, CATSPERD, CATSPERE, CATSPERZ, C2CD6/CATSPERT, SLCO6C1, TMEM249, TMEM262 and EFCAB9. HSPA1 may be an additional auxiliary complex member. The core complex members CATSPER1, CATSPER2, CATSPER3 and CATSPER4 form a heterotetrameric channel. The auxiliary CATSPERB, CATSPERG2, CATSPERD and CATSPERE subunits form a pavilion-like structure over the pore which stabilizes the complex through interactions with CATSPER4, CATSPER3, CATSPER1 and CATSPER2 respectively. SLCO6C1 interacts with CATSPERE and TMEM262/CATSPERH interacts with CATSPERB, further stabilizing the complex. C2CD6/CATSPERT interacts at least with CATSPERD and is required for targeting the CatSper complex in the flagellar membrane. In terms of tissue distribution, testis-specific.

The protein localises to the cell projection. It localises to the cilium. It is found in the flagellum membrane. The catalysed reaction is Ca(2+)(in) = Ca(2+)(out). Its activity is regulated as follows. In contrast to the human ortholog, not activated by progesterone. Activated by intracellular alkalinization. In terms of biological role, pore-forming subunit of the CatSper complex, a sperm-specific voltage-gated calcium channel that plays a central role in sperm cell hyperactivation. Controls calcium entry to mediate the hyperactivated motility, a step needed for sperm motility which is essential late in the preparation of sperm for fertilization. The chain is Cation channel sperm-associated protein 3 (Catsper3) from Mus musculus (Mouse).